The following is a 252-amino-acid chain: Segregation and condensation protein A (252 aa).

The tract at residues 117 to 136 is disordered; that stretch reads EREEERQNAFTKPPSDLSEF.

It belongs to the ScpA family. As to quaternary structure, component of a cohesin-like complex composed of ScpA, ScpB and the Smc homodimer, in which ScpA and ScpB bind to the head domain of Smc. The presence of the three proteins is required for the association of the complex with DNA.

It localises to the cytoplasm. In terms of biological role, participates in chromosomal partition during cell division. May act via the formation of a condensin-like complex containing Smc and ScpB that pull DNA away from mid-cell into both cell halves. In Bacillus pumilus (strain SAFR-032), this protein is Segregation and condensation protein A.